A 986-amino-acid polypeptide reads, in one-letter code: Probable serine/threonine-protein kinase DDB_G0272092 (986 aa).

In terms of domain architecture, C2 spans 1–107 (MARKIGSVRI…EYIVDTTKWY (107 aa)). Positions 22, 28, 76, 78, 81, and 84 each coordinate Ca(2+). ANK repeat units lie at residues 137-167 (PEKSPFIKAIKDNDTQAIELMMNKAKLDYTI), 171-201 (EGTPAIHIAAASNNIPLITMLLKGSDARVSI), 205-238 (HGNTPLHLFVQKNVSLNCEDIINKLIERGCGIND), 242-274 (LGETALHKACLATVVQKTTIVEQLLQKGAIINH), 278-307 (TRDTPLHYAIKVGKVEFVRFFLQNGANVMI), and 312-344 (PSRTPLELAKELGNPQIISKVEKVIEISDWLNE). In terms of domain architecture, SAM spans 333 to 396 (EKVIEISDWL…LRAVRKIKDP (64 aa)). Residues 412–438 (HVENDNNNNNNNNNNNNNSQEQCNINN) are compositionally biased toward low complexity. Disordered regions lie at residues 412–520 (HVEN…SNTT) and 532–574 (TTLT…PEGP). Over residues 439–448 (DSLGSGNRNS) the composition is skewed to polar residues. The segment covering 454–464 (QNQNNTLNNNN) has biased composition (low complexity). Positions 465 to 476 (VESKSTGNLNSL) are enriched in polar residues. Composition is skewed to low complexity over residues 493 to 520 (NILSPNPIPASSSAPAAPSPVAIGSNTT) and 546 to 571 (TESTTPPQQQQQTTTITPTKTTTVTP). One can recognise a Protein kinase domain in the interval 601–870 (LTYNVLLGTG…ELLKIRDEYN (270 aa)). Residues 607 to 615 (LGTGASGKV) and lysine 628 each bind ATP. Aspartate 722 functions as the Proton acceptor in the catalytic mechanism. 2 stretches are compositionally biased toward low complexity: residues 901–913 (DSNNINNNNNNNN) and 928–947 (SNSNLLNNNNNNNNNDSDNN). Residues 901–986 (DSNNINNNNN…SPMEPKSIKK (86 aa)) form a disordered region. Polar residues-rich tracts occupy residues 948 to 959 (ISEPATTDSITK) and 969 to 978 (LTRTRSSSSP).

It belongs to the protein kinase superfamily. TKL Ser/Thr protein kinase family. It depends on Ca(2+) as a cofactor.

The enzyme catalyses L-seryl-[protein] + ATP = O-phospho-L-seryl-[protein] + ADP + H(+). It carries out the reaction L-threonyl-[protein] + ATP = O-phospho-L-threonyl-[protein] + ADP + H(+). This Dictyostelium discoideum (Social amoeba) protein is Probable serine/threonine-protein kinase DDB_G0272092.